A 326-amino-acid polypeptide reads, in one-letter code: Metal-binding protein YtgA (326 aa).

The signal sequence occupies residues 1–21 (MSFFHTRKYKLILRGLLCLAG). Residues His-75, His-141, His-207, and Asp-299 each contribute to the Fe(2+) site.

It belongs to the bacterial solute-binding protein 9 family. As to quaternary structure, monomer.

The protein localises to the periplasm. Its function is as follows. Part of the ATP-binding cassette (ABC) transport system YtgABCD involved in metal import. Binds Fe(2+), Mn(2+) and Ni(2+), with a preference for Fe(2+) and delivers them to the membrane permease for translocation into the cytoplasm. The protein is Metal-binding protein YtgA of Chlamydia trachomatis serovar D (strain ATCC VR-885 / DSM 19411 / UW-3/Cx).